The following is a 25-amino-acid chain: SPbeta prophage-derived uncharacterized protein YotF (25 aa).

The polypeptide is SPbeta prophage-derived uncharacterized protein YotF (yotF) (Bacillus subtilis (strain 168)).